Here is a 145-residue protein sequence, read N- to C-terminus: Large ribosomal subunit protein uL13 (145 aa).

The protein belongs to the universal ribosomal protein uL13 family. As to quaternary structure, part of the 50S ribosomal subunit.

This protein is one of the early assembly proteins of the 50S ribosomal subunit, although it is not seen to bind rRNA by itself. It is important during the early stages of 50S assembly. The polypeptide is Large ribosomal subunit protein uL13 (Staphylococcus saprophyticus subsp. saprophyticus (strain ATCC 15305 / DSM 20229 / NCIMB 8711 / NCTC 7292 / S-41)).